Here is a 206-residue protein sequence, read N- to C-terminus: Large ribosomal subunit protein uL3 (206 aa).

Residues 127–151 (SGGPSSHGSKFHRHLGGTGQATTPA) form a disordered region.

It belongs to the universal ribosomal protein uL3 family. Part of the 50S ribosomal subunit. Forms a cluster with proteins L14 and L19.

Functionally, one of the primary rRNA binding proteins, it binds directly near the 3'-end of the 23S rRNA, where it nucleates assembly of the 50S subunit. The polypeptide is Large ribosomal subunit protein uL3 (Borrelia garinii subsp. bavariensis (strain ATCC BAA-2496 / DSM 23469 / PBi) (Borreliella bavariensis)).